A 268-amino-acid polypeptide reads, in one-letter code: Bis(5'-nucleosyl)-tetraphosphatase, symmetrical (268 aa).

The protein belongs to the Ap4A hydrolase family.

The catalysed reaction is P(1),P(4)-bis(5'-adenosyl) tetraphosphate + H2O = 2 ADP + 2 H(+). In terms of biological role, hydrolyzes diadenosine 5',5'''-P1,P4-tetraphosphate to yield ADP. This is Bis(5'-nucleosyl)-tetraphosphatase, symmetrical from Vibrio campbellii (strain ATCC BAA-1116).